The chain runs to 376 residues: Copper-containing nitrite reductase (376 aa).

The tat-type signal signal peptide spans 1 to 33; the sequence is MSEQFQMTRRSMLAGAAIAGAVTPLIGAVSAHA. Plastocyanin-like domains lie at 98–193 and 258–359; these read MTFN…IMVL and GAVG…FAVT. Cu cation contacts are provided by histidine 131, histidine 136, histidine 171, cysteine 172, histidine 181, methionine 186, and histidine 342.

The protein belongs to the multicopper oxidase family. Homotrimer. It depends on Cu(2+) as a cofactor. Cu(+) serves as cofactor. The cofactor is FAD. Predicted to be exported by the Tat system. The position of the signal peptide cleavage has not been experimentally proven.

The protein resides in the periplasm. It catalyses the reaction nitric oxide + Fe(III)-[cytochrome c] + H2O = Fe(II)-[cytochrome c] + nitrite + 2 H(+). It functions in the pathway nitrogen metabolism; nitrate reduction (denitrification); dinitrogen from nitrate: step 2/4. This Rhizobium meliloti (strain 1021) (Ensifer meliloti) protein is Copper-containing nitrite reductase (nirK).